Here is a 232-residue protein sequence, read N- to C-terminus: Uracil-DNA glycosylase (232 aa).

Asp66 acts as the Proton acceptor in catalysis.

The protein belongs to the uracil-DNA glycosylase (UDG) superfamily. UNG family.

The protein localises to the cytoplasm. It catalyses the reaction Hydrolyzes single-stranded DNA or mismatched double-stranded DNA and polynucleotides, releasing free uracil.. Functionally, excises uracil residues from the DNA which can arise as a result of misincorporation of dUMP residues by DNA polymerase or due to deamination of cytosine. The sequence is that of Uracil-DNA glycosylase from Lactobacillus helveticus (strain DPC 4571).